The primary structure comprises 250 residues: Small ribosomal subunit protein uS2 (250 aa).

Belongs to the universal ribosomal protein uS2 family.

The chain is Small ribosomal subunit protein uS2 from Polaromonas sp. (strain JS666 / ATCC BAA-500).